A 291-amino-acid chain; its full sequence is N-acetylmannosamine kinase (291 aa).

Residues 5–12 (AIDIGGTK) and 132–139 (GVGGGVVS) each bind ATP. Positions 156, 166, 168, and 173 each coordinate Zn(2+).

This sequence belongs to the ROK (NagC/XylR) family. NanK subfamily. As to quaternary structure, homodimer.

It carries out the reaction an N-acyl-D-mannosamine + ATP = an N-acyl-D-mannosamine 6-phosphate + ADP + H(+). The protein operates within amino-sugar metabolism; N-acetylneuraminate degradation; D-fructose 6-phosphate from N-acetylneuraminate: step 2/5. Functionally, catalyzes the phosphorylation of N-acetylmannosamine (ManNAc) to ManNAc-6-P. The chain is N-acetylmannosamine kinase from Escherichia coli (strain SE11).